The primary structure comprises 437 residues: Glutamate-1-semialdehyde 2,1-aminomutase 1 (437 aa).

Lys268 carries the post-translational modification N6-(pyridoxal phosphate)lysine.

It belongs to the class-III pyridoxal-phosphate-dependent aminotransferase family. HemL subfamily. In terms of assembly, homodimer. Pyridoxal 5'-phosphate is required as a cofactor.

The protein resides in the cytoplasm. The catalysed reaction is (S)-4-amino-5-oxopentanoate = 5-aminolevulinate. It functions in the pathway porphyrin-containing compound metabolism; protoporphyrin-IX biosynthesis; 5-aminolevulinate from L-glutamyl-tRNA(Glu): step 2/2. The protein is Glutamate-1-semialdehyde 2,1-aminomutase 1 of Halalkalibacterium halodurans (strain ATCC BAA-125 / DSM 18197 / FERM 7344 / JCM 9153 / C-125) (Bacillus halodurans).